The following is a 127-amino-acid chain: Small ribosomal subunit protein uS12 (127 aa).

3-methylthioaspartic acid is present on aspartate 89. A disordered region spans residues 102–127; that stretch reads LDTAGVKDRKQGRSKYGTKRPKEAKK. Positions 113–127 are enriched in basic residues; sequence GRSKYGTKRPKEAKK.

The protein belongs to the universal ribosomal protein uS12 family. As to quaternary structure, part of the 30S ribosomal subunit. Contacts proteins S8 and S17. May interact with IF1 in the 30S initiation complex.

Functionally, with S4 and S5 plays an important role in translational accuracy. Interacts with and stabilizes bases of the 16S rRNA that are involved in tRNA selection in the A site and with the mRNA backbone. Located at the interface of the 30S and 50S subunits, it traverses the body of the 30S subunit contacting proteins on the other side and probably holding the rRNA structure together. The combined cluster of proteins S8, S12 and S17 appears to hold together the shoulder and platform of the 30S subunit. The protein is Small ribosomal subunit protein uS12 of Nostoc punctiforme (strain ATCC 29133 / PCC 73102).